Reading from the N-terminus, the 374-residue chain is 3-isopropylmalate dehydrogenase (374 aa).

83-96 contributes to the NAD(+) binding site; sequence GPKWDNLPPEIRPE. Residues arginine 104, arginine 114, arginine 142, and aspartate 231 each contribute to the substrate site. Mg(2+)-binding residues include aspartate 231, aspartate 255, and aspartate 259. Position 288–300 (288–300) interacts with NAD(+); it reads GSAPDIAGQNKAN.

The protein belongs to the isocitrate and isopropylmalate dehydrogenases family. LeuB type 1 subfamily. Homodimer. It depends on Mg(2+) as a cofactor. Mn(2+) is required as a cofactor.

It is found in the cytoplasm. It catalyses the reaction (2R,3S)-3-isopropylmalate + NAD(+) = 4-methyl-2-oxopentanoate + CO2 + NADH. It participates in amino-acid biosynthesis; L-leucine biosynthesis; L-leucine from 3-methyl-2-oxobutanoate: step 3/4. Its function is as follows. Catalyzes the oxidation of 3-carboxy-2-hydroxy-4-methylpentanoate (3-isopropylmalate) to 3-carboxy-4-methyl-2-oxopentanoate. The product decarboxylates to 4-methyl-2 oxopentanoate. The protein is 3-isopropylmalate dehydrogenase of Carboxydothermus hydrogenoformans (strain ATCC BAA-161 / DSM 6008 / Z-2901).